A 124-amino-acid chain; its full sequence is Con-Ins Tx1 (124 aa).

A signal peptide spans 1-24 (MTTSSYFLLVALGLLLYVFQSSFG). 4 disulfide bridges follow: cysteine 29/cysteine 107, cysteine 41/cysteine 110, cysteine 53/cysteine 123, and cysteine 109/cysteine 114. The residue at position 34 (proline 34) is a 4-hydroxyproline; partial. Positions 59 to 92 (EQGGANNARANTGRTSSLMKRRGFLSLLKKRGKR) are cleaved as a propeptide — c peptide. Glutamate 118 is modified (4-carboxyglutamate; partial).

This sequence belongs to the insulin family. As to quaternary structure, heterodimer of A and B chains; disulfide-linked. In terms of tissue distribution, expressed by the venom gland.

It is found in the secreted. In terms of biological role, this venom insulin facilitates prey capture by rapidly inducing hypoglycemic shock. Intraperitoneal injection of this peptide into zebrafish lowers blood glucose with the same potency than human insulin. In vivo, when applied to water, this peptide reduces overall locomotor activity of zebrafish larvae, observed as a significant decrease in the percentage of time spent swimming and movement frequency. The protein is Con-Ins Tx1 of Conus textile (Cloth-of-gold cone).